A 365-amino-acid polypeptide reads, in one-letter code: Phospho-N-acetylmuramoyl-pentapeptide-transferase (365 aa).

The next 10 helical transmembrane spans lie at 22–42 (YISV…LALG), 74–94 (TMGG…WGDL), 95–115 (TSIY…IGFF), 134–154 (KFAL…YLLS), 168–188 (SLYI…IING), 201–221 (GLAI…AYIE), 240–260 (LAEV…FLWF), 267–287 (VFMG…IAVM), 292–312 (LIFF…MLQV), and 342–362 (KVVI…LAAI).

It belongs to the glycosyltransferase 4 family. MraY subfamily. Mg(2+) serves as cofactor.

It is found in the cell inner membrane. It catalyses the reaction UDP-N-acetyl-alpha-D-muramoyl-L-alanyl-gamma-D-glutamyl-meso-2,6-diaminopimeloyl-D-alanyl-D-alanine + di-trans,octa-cis-undecaprenyl phosphate = di-trans,octa-cis-undecaprenyl diphospho-N-acetyl-alpha-D-muramoyl-L-alanyl-D-glutamyl-meso-2,6-diaminopimeloyl-D-alanyl-D-alanine + UMP. Its pathway is cell wall biogenesis; peptidoglycan biosynthesis. Its function is as follows. Catalyzes the initial step of the lipid cycle reactions in the biosynthesis of the cell wall peptidoglycan: transfers peptidoglycan precursor phospho-MurNAc-pentapeptide from UDP-MurNAc-pentapeptide onto the lipid carrier undecaprenyl phosphate, yielding undecaprenyl-pyrophosphoryl-MurNAc-pentapeptide, known as lipid I. This chain is Phospho-N-acetylmuramoyl-pentapeptide-transferase, found in Francisella tularensis subsp. novicida (strain U112).